The following is a 412-amino-acid chain: Phosphoglycerate kinase (412 aa).

Substrate is bound by residues 26–28 (DFN), Arg-42, 65–68 (HLGR), Arg-133, and Arg-166. ATP contacts are provided by residues Lys-217, Gly-308, Glu-339, and 368-371 (GGDS).

It belongs to the phosphoglycerate kinase family. As to quaternary structure, monomer.

The protein resides in the cytoplasm. It carries out the reaction (2R)-3-phosphoglycerate + ATP = (2R)-3-phospho-glyceroyl phosphate + ADP. The protein operates within carbohydrate degradation; glycolysis; pyruvate from D-glyceraldehyde 3-phosphate: step 2/5. The polypeptide is Phosphoglycerate kinase (Synechococcus sp. (strain JA-3-3Ab) (Cyanobacteria bacterium Yellowstone A-Prime)).